The following is a 436-amino-acid chain: GTPase Der (436 aa).

2 EngA-type G domains span residues 4–165 (NVIA…NFDS) and 172–347 (FKLS…ENLE). Residues 10–17 (GKPNVGKS), 57–61 (DTGGI), 119–122 (NKLD), 178–185 (GQPNSGKS), 225–229 (DTAGI), and 290–293 (NKWD) contribute to the GTP site. The KH-like domain occupies 348-432 (REIKPSVLTN…PINIIFKNKS (85 aa)).

The protein belongs to the TRAFAC class TrmE-Era-EngA-EngB-Septin-like GTPase superfamily. EngA (Der) GTPase family. In terms of assembly, associates with the 50S ribosomal subunit.

GTPase that plays an essential role in the late steps of ribosome biogenesis. This Mycoplasmopsis agalactiae (strain NCTC 10123 / CIP 59.7 / PG2) (Mycoplasma agalactiae) protein is GTPase Der.